The primary structure comprises 983 residues: Probable beta-galactosidase C (983 aa).

The N-terminal stretch at 1–23 (MRIFSFLFLLLLGILTGQGLVSG) is a signal peptide. Substrate contacts are provided by Y82, N127, A128, E129, and N187. Catalysis depends on E188, which acts as the Proton donor. An N-linked (GlcNAc...) asparagine glycan is attached at N197. Y251 contributes to the substrate binding site. C257 and C304 form a disulfide bridge. A glycan (N-linked (GlcNAc...) asparagine) is linked at N276. Catalysis depends on E287, which acts as the Nucleophile. Y353 lines the substrate pocket. 10 N-linked (GlcNAc...) asparagine glycosylation sites follow: N391, N434, N466, N516, N601, N676, N714, N719, N758, and N804.

The protein belongs to the glycosyl hydrolase 35 family.

The protein localises to the secreted. The enzyme catalyses Hydrolysis of terminal non-reducing beta-D-galactose residues in beta-D-galactosides.. Functionally, cleaves beta-linked terminal galactosyl residues from gangliosides, glycoproteins, and glycosaminoglycans. In Aspergillus fumigatus (strain CBS 144.89 / FGSC A1163 / CEA10) (Neosartorya fumigata), this protein is Probable beta-galactosidase C (lacC).